The primary structure comprises 169 residues: S-ribosylhomocysteine lyase (169 aa).

Fe cation-binding residues include H54, H58, and C128.

Belongs to the LuxS family. In terms of assembly, homodimer. Fe cation serves as cofactor.

It catalyses the reaction S-(5-deoxy-D-ribos-5-yl)-L-homocysteine = (S)-4,5-dihydroxypentane-2,3-dione + L-homocysteine. Functionally, involved in the synthesis of autoinducer 2 (AI-2) which is secreted by bacteria and is used to communicate both the cell density and the metabolic potential of the environment. The regulation of gene expression in response to changes in cell density is called quorum sensing. Catalyzes the transformation of S-ribosylhomocysteine (RHC) to homocysteine (HC) and 4,5-dihydroxy-2,3-pentadione (DPD). This is S-ribosylhomocysteine lyase from Shewanella sp. (strain MR-4).